A 254-amino-acid polypeptide reads, in one-letter code: 3-deoxy-manno-octulosonate cytidylyltransferase (254 aa).

The protein belongs to the KdsB family.

Its subcellular location is the cytoplasm. The catalysed reaction is 3-deoxy-alpha-D-manno-oct-2-ulosonate + CTP = CMP-3-deoxy-beta-D-manno-octulosonate + diphosphate. Its pathway is nucleotide-sugar biosynthesis; CMP-3-deoxy-D-manno-octulosonate biosynthesis; CMP-3-deoxy-D-manno-octulosonate from 3-deoxy-D-manno-octulosonate and CTP: step 1/1. The protein operates within bacterial outer membrane biogenesis; lipopolysaccharide biosynthesis. Functionally, activates KDO (a required 8-carbon sugar) for incorporation into bacterial lipopolysaccharide in Gram-negative bacteria. This chain is 3-deoxy-manno-octulosonate cytidylyltransferase, found in Ectopseudomonas mendocina (strain ymp) (Pseudomonas mendocina).